The following is a 284-amino-acid chain: NAD kinase (284 aa).

Asp-67 (proton acceptor) is an active-site residue. NAD(+)-binding positions include 67-68 (DG), 141-142 (ND), Arg-152, Lys-169, Asp-171, 182-187 (TGYSLS), and Gln-241.

Belongs to the NAD kinase family. The cofactor is a divalent metal cation.

The protein localises to the cytoplasm. The catalysed reaction is NAD(+) + ATP = ADP + NADP(+) + H(+). Involved in the regulation of the intracellular balance of NAD and NADP, and is a key enzyme in the biosynthesis of NADP. Catalyzes specifically the phosphorylation on 2'-hydroxyl of the adenosine moiety of NAD to yield NADP. This Geobacter sulfurreducens (strain ATCC 51573 / DSM 12127 / PCA) protein is NAD kinase.